The chain runs to 355 residues: S-adenosylmethionine:tRNA ribosyltransferase-isomerase (355 aa).

This sequence belongs to the QueA family. As to quaternary structure, monomer.

It is found in the cytoplasm. The catalysed reaction is 7-aminomethyl-7-carbaguanosine(34) in tRNA + S-adenosyl-L-methionine = epoxyqueuosine(34) in tRNA + adenine + L-methionine + 2 H(+). Its pathway is tRNA modification; tRNA-queuosine biosynthesis. Transfers and isomerizes the ribose moiety from AdoMet to the 7-aminomethyl group of 7-deazaguanine (preQ1-tRNA) to give epoxyqueuosine (oQ-tRNA). The protein is S-adenosylmethionine:tRNA ribosyltransferase-isomerase of Photorhabdus laumondii subsp. laumondii (strain DSM 15139 / CIP 105565 / TT01) (Photorhabdus luminescens subsp. laumondii).